The sequence spans 398 residues: Phosphoglycerate kinase (398 aa).

Residues 21-23 (DFN), Arg-36, 59-62 (HLGR), Arg-119, and Arg-157 each bind substrate. ATP-binding positions include Lys-208, Gly-296, Glu-327, and 354–357 (GGDS).

The protein belongs to the phosphoglycerate kinase family. As to quaternary structure, monomer.

The protein resides in the cytoplasm. The enzyme catalyses (2R)-3-phosphoglycerate + ATP = (2R)-3-phospho-glyceroyl phosphate + ADP. Its pathway is carbohydrate degradation; glycolysis; pyruvate from D-glyceraldehyde 3-phosphate: step 2/5. The protein is Phosphoglycerate kinase of Streptococcus pyogenes serotype M18 (strain MGAS8232).